The following is a 490-amino-acid chain: ATP synthase subunit alpha 1 (490 aa).

This sequence belongs to the ATPase alpha/beta chains family. F-type ATPases have 2 components, CF(1) - the catalytic core - and CF(0) - the membrane proton channel. CF(1) has five subunits: alpha(3), beta(3), gamma(1), delta(1), epsilon(1). CF(0) has three main subunits: a(1), b(2) and c(9-12). The alpha and beta chains form an alternating ring which encloses part of the gamma chain. CF(1) is attached to CF(0) by a central stalk formed by the gamma and epsilon chains, while a peripheral stalk is formed by the delta and b chains.

It localises to the cell inner membrane. The enzyme catalyses ATP + H2O + 4 H(+)(in) = ADP + phosphate + 5 H(+)(out). Produces ATP from ADP in the presence of a proton gradient across the membrane. The alpha chain is a regulatory subunit. The sequence is that of ATP synthase subunit alpha 1 from Legionella pneumophila (strain Paris).